We begin with the raw amino-acid sequence, 92 residues long: uncharacterized protein (92 aa).

The interval 1 to 92 (MSDAAAPAQA…PSPSQQQVAA (92 aa)) is disordered.

This is an uncharacterized protein from Caenorhabditis elegans.